A 499-amino-acid chain; its full sequence is Glycerol kinase (499 aa).

An ADP-binding site is contributed by Thr-12. Residues Thr-12, Thr-13, and Ser-14 each coordinate ATP. Position 12 (Thr-12) interacts with sn-glycerol 3-phosphate. ADP is bound at residue Arg-16. Sn-glycerol 3-phosphate is bound by residues Arg-82, Glu-83, Tyr-134, and Asp-243. Glycerol contacts are provided by Arg-82, Glu-83, Tyr-134, Asp-243, and Gln-244. ADP contacts are provided by Thr-265 and Gly-308. Positions 265, 308, 312, and 409 each coordinate ATP. 2 residues coordinate ADP: Gly-409 and Asn-413.

It belongs to the FGGY kinase family. Homotetramer and homodimer (in equilibrium).

The catalysed reaction is glycerol + ATP = sn-glycerol 3-phosphate + ADP + H(+). Its pathway is polyol metabolism; glycerol degradation via glycerol kinase pathway; sn-glycerol 3-phosphate from glycerol: step 1/1. Its activity is regulated as follows. Activated by phosphorylation and inhibited by fructose 1,6-bisphosphate (FBP). In terms of biological role, key enzyme in the regulation of glycerol uptake and metabolism. Catalyzes the phosphorylation of glycerol to yield sn-glycerol 3-phosphate. This chain is Glycerol kinase, found in Lachnoclostridium phytofermentans (strain ATCC 700394 / DSM 18823 / ISDg) (Clostridium phytofermentans).